The primary structure comprises 81 residues: Cytotoxin 1 (81 aa).

Positions 1–21 are cleaved as a signal peptide; that stretch reads MKTLLLTLVVVTIVCLDLGYT. Intrachain disulfides connect cysteine 24-cysteine 42, cysteine 35-cysteine 59, cysteine 63-cysteine 74, and cysteine 75-cysteine 80.

Belongs to the three-finger toxin family. Short-chain subfamily. Type IA cytotoxin sub-subfamily. As to quaternary structure, monomer in solution; homodimer and oligomer in the presence of negatively charged lipids forming a pore with a size ranging between 20 and 30 Angstroms. As to expression, expressed by the venom gland.

The protein localises to the secreted. It is found in the target cell membrane. Its function is as follows. Shows cytolytic activity on many different cells by forming pores in lipid membranes. Exhibits concentration-dependent growth inhibitory effects in the lung cell lines A549 (IC(50)= 0.88) and NL20 (IC(50)= 1.91), in the prostate cell lines PC-3 (IC(50)= 3.13 ug/ml) and RWPE-1 (IC(50)=0.35 ug/ml), and in the breast cell lines MCF-7 (IC(50)= 9.10 ug/ml) and 184B5 (IC(50)=6.21 ug/ml), with high selectivity for the lung cancer cell line A549 (selectivity index=2.17). Induces primarily necrosis in the A549 lung cancer cell line, and mainly caspase-independent late apoptosis in the breast cancer cells line MCF-7 and in the prostate cancer cell line PC-3. The sequence is that of Cytotoxin 1 from Naja sumatrana (Equatorial spitting cobra).